Reading from the N-terminus, the 139-residue chain is Orientotoxin-2 (139 aa).

Expressed by the venom gland.

It localises to the secreted. The enzyme catalyses a 1,2-diacyl-sn-glycero-3-phosphocholine + H2O = a 1-acyl-sn-glycero-3-phosphocholine + a fatty acid + H(+). Has a highly toxic phospholipase A2 activity. The sequence is that of Orientotoxin-2 from Vespa orientalis (Oriental hornet).